The following is a 525-amino-acid chain: Probable protein kinase UbiB (525 aa).

In terms of domain architecture, Protein kinase spans 119-501 (RFDHHPVASA…QRRTNRLLSA (383 aa)). ATP contacts are provided by residues 125–133 (VASASIAQV) and lysine 151. The Proton acceptor role is filled by aspartate 286. The helical transmembrane segment at 502 to 522 (ALLFIGGFAVGIIATHVLAWL) threads the bilayer.

Belongs to the ABC1 family. UbiB subfamily.

The protein resides in the cell inner membrane. It functions in the pathway cofactor biosynthesis; ubiquinone biosynthesis [regulation]. Functionally, is probably a protein kinase regulator of UbiI activity which is involved in aerobic coenzyme Q (ubiquinone) biosynthesis. This is Probable protein kinase UbiB from Ralstonia nicotianae (strain ATCC BAA-1114 / GMI1000) (Ralstonia solanacearum).